Consider the following 494-residue polypeptide: Glycerol kinase (494 aa).

Position 13 (Thr13) interacts with ADP. ATP-binding residues include Thr13, Thr14, and Ser15. Position 13 (Thr13) interacts with sn-glycerol 3-phosphate. Arg17 serves as a coordination point for ADP. Sn-glycerol 3-phosphate contacts are provided by Arg83, Glu84, Tyr135, and Asp244. Residues Arg83, Glu84, Tyr135, Asp244, and Gln245 each coordinate glycerol. Positions 266 and 309 each coordinate ADP. Thr266, Gly309, Gln313, and Gly410 together coordinate ATP. Positions 410 and 414 each coordinate ADP.

The protein belongs to the FGGY kinase family.

It carries out the reaction glycerol + ATP = sn-glycerol 3-phosphate + ADP + H(+). Its pathway is polyol metabolism; glycerol degradation via glycerol kinase pathway; sn-glycerol 3-phosphate from glycerol: step 1/1. With respect to regulation, inhibited by fructose 1,6-bisphosphate (FBP). Key enzyme in the regulation of glycerol uptake and metabolism. Catalyzes the phosphorylation of glycerol to yield sn-glycerol 3-phosphate. In Shewanella putrefaciens (strain CN-32 / ATCC BAA-453), this protein is Glycerol kinase.